The following is a 206-amino-acid chain: 3-isopropylmalate dehydratase small subunit (206 aa).

The protein belongs to the LeuD family. LeuD type 1 subfamily. In terms of assembly, heterodimer of LeuC and LeuD.

It catalyses the reaction (2R,3S)-3-isopropylmalate = (2S)-2-isopropylmalate. It participates in amino-acid biosynthesis; L-leucine biosynthesis; L-leucine from 3-methyl-2-oxobutanoate: step 2/4. Functionally, catalyzes the isomerization between 2-isopropylmalate and 3-isopropylmalate, via the formation of 2-isopropylmaleate. This chain is 3-isopropylmalate dehydratase small subunit, found in Leptospira borgpetersenii serovar Hardjo-bovis (strain JB197).